Here is a 99-residue protein sequence, read N- to C-terminus: Aspartyl/glutamyl-tRNA(Asn/Gln) amidotransferase subunit C (99 aa).

This sequence belongs to the GatC family. As to quaternary structure, heterotrimer of A, B and C subunits.

The enzyme catalyses L-glutamyl-tRNA(Gln) + L-glutamine + ATP + H2O = L-glutaminyl-tRNA(Gln) + L-glutamate + ADP + phosphate + H(+). It carries out the reaction L-aspartyl-tRNA(Asn) + L-glutamine + ATP + H2O = L-asparaginyl-tRNA(Asn) + L-glutamate + ADP + phosphate + 2 H(+). Allows the formation of correctly charged Asn-tRNA(Asn) or Gln-tRNA(Gln) through the transamidation of misacylated Asp-tRNA(Asn) or Glu-tRNA(Gln) in organisms which lack either or both of asparaginyl-tRNA or glutaminyl-tRNA synthetases. The reaction takes place in the presence of glutamine and ATP through an activated phospho-Asp-tRNA(Asn) or phospho-Glu-tRNA(Gln). In Corynebacterium glutamicum (strain R), this protein is Aspartyl/glutamyl-tRNA(Asn/Gln) amidotransferase subunit C.